The sequence spans 874 residues: Alanine--tRNA ligase (874 aa).

Residues His564, His568, Cys665, and His669 each coordinate Zn(2+).

It belongs to the class-II aminoacyl-tRNA synthetase family. Zn(2+) is required as a cofactor.

Its subcellular location is the cytoplasm. The catalysed reaction is tRNA(Ala) + L-alanine + ATP = L-alanyl-tRNA(Ala) + AMP + diphosphate. Catalyzes the attachment of alanine to tRNA(Ala) in a two-step reaction: alanine is first activated by ATP to form Ala-AMP and then transferred to the acceptor end of tRNA(Ala). Also edits incorrectly charged Ser-tRNA(Ala) and Gly-tRNA(Ala) via its editing domain. This is Alanine--tRNA ligase from Paraburkholderia xenovorans (strain LB400).